The chain runs to 185 residues: Ribosome-recycling factor (185 aa).

Belongs to the RRF family.

Its subcellular location is the cytoplasm. In terms of biological role, responsible for the release of ribosomes from messenger RNA at the termination of protein biosynthesis. May increase the efficiency of translation by recycling ribosomes from one round of translation to another. The polypeptide is Ribosome-recycling factor (Wigglesworthia glossinidia brevipalpis).